A 1080-amino-acid polypeptide reads, in one-letter code: DNA polymerase II large subunit (1080 aa).

It belongs to the archaeal DNA polymerase II family. In terms of assembly, heterodimer of a large subunit and a small subunit.

The enzyme catalyses DNA(n) + a 2'-deoxyribonucleoside 5'-triphosphate = DNA(n+1) + diphosphate. It catalyses the reaction Exonucleolytic cleavage in the 3'- to 5'-direction to yield nucleoside 5'-phosphates.. Possesses two activities: a DNA synthesis (polymerase) and an exonucleolytic activity that degrades single-stranded DNA in the 3'- to 5'-direction. Has a template-primer preference which is characteristic of a replicative DNA polymerase. This chain is DNA polymerase II large subunit, found in Picrophilus torridus (strain ATCC 700027 / DSM 9790 / JCM 10055 / NBRC 100828 / KAW 2/3).